The chain runs to 2319 residues: AT-rich interactive domain-containing protein 1B (2319 aa).

Low complexity-rich tracts occupy residues 1–21 (MAARAAAAAAAAAARARARAG) and 43–56 (GARGAAAAAAAPGP). Disordered stretches follow at residues 1-74 (MAAR…VHHH), 155-306 (VGEA…GGGG), 321-414 (APAS…GAGA), 487-546 (RFAG…AGAA), 577-1062 (QQRS…LMNT), and 1085-1129 (DMMS…KITK). The residue at position 2 (A2) is an N-acetylalanine. A compositionally biased stretch (gly residues) spans 57-68 (MLGGGGDGGGGL). Residues 165 to 188 (QQHHHHHHAHHHHHHAHHLHHHHA) are compositionally biased toward basic residues. 2 stretches are compositionally biased toward low complexity: residues 189 to 215 (LQQQLNQFQQQQQQQQQQQQQQQQQQH) and 343 to 363 (SPGMGMMHSASAAAAGAPGSM). A compositionally biased stretch (polar residues) spans 365–379 (PLQNSHEGYPNSQCN). Residues 388-414 (GAGGGGGGGGGGGGGSGGGGGGGGAGA) show a composition bias toward gly residues. The residue at position 487 (R487) is an Asymmetric dimethylarginine. The span at 489–510 (AGQNQHPSGATPTLNQLLTSPS) shows a compositional bias: polar residues. The LXXLL signature appears at 502-506 (LNQLL). Low complexity predominate over residues 536-546 (PQSQAAAAGAA). Residues S585 and S599 each carry the phosphoserine modification. Position 608 is an asymmetric dimethylarginine (R608). Residues 620-630 (SQPQQSSPYPG) are compositionally biased toward low complexity. Position 640 is an asymmetric dimethylarginine (R640). 6 stretches are compositionally biased toward low complexity: residues 651-670 (GAMAGMQYPQQQMPPQYGQQ), 677-687 (QQGQQPYYSQQ), 695-712 (PQAQYLPSQSQQRYQPQQ), 767-783 (SSAVSASGSTSSQGDQS), 811-832 (GSPVGSNQSRSGPISPASIPGS), and 840-849 (GSQSESSSHP). A compositionally biased stretch (polar residues) spans 866–880 (TQRNPQMAQYGPQQT). Residues 881 to 892 (GPSMSPHPSPGG) are compositionally biased toward low complexity. Polar residues-rich tracts occupy residues 899–923 (SSFQQSNSSGTYGPQMSQYGPQGNY) and 947–958 (SANNQMHGQGPS). 2 stretches are compositionally biased toward low complexity: residues 980-994 (PGNMSSMTPSSPGMS) and 1014-1028 (EAAAAVMQAAANSAQ). Positions 1029–1062 (SRQGSFPGMNQSGLMASSSPYSQPMNNSSSLMNT) are enriched in polar residues. An ARID domain is found at 1136 to 1227 (EPERKLWVDR…YLFAFECKIE (92 aa)). 4 disordered regions span residues 1230-1334 (EEPP…QQGM), 1346-1443 (EPNK…PNYK), 1475-1647 (NQYG…FLPS), and 1782-1852 (DHNA…KQAS). Polar residues-rich tracts occupy residues 1254 to 1273 (ANSGSLQGPQTPQSTGSNSM) and 1287 to 1304 (STPHGQMTPMQGGRSSTI). The span at 1305–1319 (SVHDPFSDVSDSSFP) shows a compositional bias: low complexity. Polar residues-rich tracts occupy residues 1320–1334 (KRNSMTPNAPYQQGM) and 1364–1388 (PFMTQGQMPNSSMQDMYNQSPSGAM). The segment covering 1426–1440 (PPYGGHQPGLYPQQP) has biased composition (low complexity). A Nuclear localization signal motif is present at residues 1441 to 1460 (NYKRHMDGMYGPPAKRHEGD). Polar residues-rich tracts occupy residues 1522–1534 (LQSSSSEGPQQNM) and 1579–1601 (ESQWPSHVSQRQPYMSSSASMQP). Phosphoserine occurs at positions 1625, 1638, and 1642. Residues 1627–1641 (ASFQRSLENRMSPSK) are compositionally biased toward polar residues. Residues 1782–1791 (DHNAARKDDS) show a composition bias toward basic and acidic residues. S1798 carries the phosphoserine modification. Over residues 1799-1823 (GKEEEDAECIDDDEEDEEDEEEDSE) the composition is skewed to acidic residues. A compositionally biased stretch (basic and acidic residues) spans 1842-1852 (ADPKEKPKQAS). At K1860 the chain carries N6-acetyllysine. Disordered regions lie at residues 1904 to 1941 (FESKMEIPPRRRPPPPLSSAGRKKEQEGKGDSEEQQEK) and 1954 to 1973 (RPGALPEDANPGPQTESSKF). The segment covering 1925 to 1940 (RKKEQEGKGDSEEQQE) has biased composition (basic and acidic residues). The LXXLL signature appears at 2119–2123 (LDGLL).

Component of SWI/SNF chromatin remodeling complexes, in some of which it can be mutually exclusive with ARID1B/BAF250B. The canonical complex contains a catalytic subunit (either SMARCA4/BRG1/BAF190A or SMARCA2/BRM/BAF190B) and at least SMARCE1, ACTL6A/BAF53, SMARCC1/BAF155, SMARCC2/BAF170, and SMARCB1/SNF5/BAF47. Other subunits specific to each of the complexes may also be present permitting several possible combinations developmentally and tissue specific. Component of the BAF (SWI/SNF-A) complex, which includes at least actin (ACTB), ARID1A/BAF250A, ARID1B/BAF250B, SMARCA2/BRM, SMARCA4/BRG1/BAF190A, ACTL6A/BAF53, ACTL6B/BAF53B, SMARCE1/BAF57, SMARCC1/BAF155, SMARCC2/BAF170, SMARCB1/SNF5/INI1, and one or more SMARCD1/BAF60A, SMARCD2/BAF60B, or SMARCD3/BAF60C. In muscle cells, the BAF complex also contains DPF3. Component of neural progenitors-specific chromatin remodeling complex (npBAF complex) composed of at least, ARID1A/BAF250A or ARID1B/BAF250B, SMARCD1/BAF60A, SMARCD3/BAF60C, SMARCA2/BRM/BAF190B, SMARCA4/BRG1/BAF190A, SMARCB1/BAF47, SMARCC1/BAF155, SMARCE1/BAF57, SMARCC2/BAF170, PHF10/BAF45A, ACTL6A/BAF53A and actin. Component of neuron-specific chromatin remodeling complex (nBAF complex) composed of at least, ARID1A/BAF250A or ARID1B/BAF250B, SMARCD1/BAF60A, SMARCD3/BAF60C, SMARCA2/BRM/BAF190B, SMARCA4/BRG1/BAF190A, SMARCB1/BAF47, SMARCC1/BAF155, SMARCE1/BAF57, SMARCC2/BAF170, DPF1/BAF45B, DPF3/BAF45C, ACTL6B/BAF53B and actin. Component of a SWI/SNF-like EBAFb complex, at least composed of SMARCA4/BRG1/BAF190A, SMARCB1/BAF47/SNF5, ACTL6A/BAF53A, SMARCE1/BAF57, SMARCD1/BAF60A, SMARCD2/BAF60B, SMARCC1/BAF155, SMARCC2/BAF170, ARID1B/BAF250B, MLLT1/ENL and actin. Interacts through its C-terminus with SMARCA2/BRM/BAF190B and SMARCA4/BRG1/BAF190A. Interacts with SMARCC1/BAF155. As to expression, widely expressed with high levels in heart, skeletal muscle and kidney.

The protein localises to the nucleus. Its function is as follows. Involved in transcriptional activation and repression of select genes by chromatin remodeling (alteration of DNA-nucleosome topology). Component of SWI/SNF chromatin remodeling complexes that carry out key enzymatic activities, changing chromatin structure by altering DNA-histone contacts within a nucleosome in an ATP-dependent manner. Belongs to the neural progenitors-specific chromatin remodeling complex (npBAF complex) and the neuron-specific chromatin remodeling complex (nBAF complex). During neural development a switch from a stem/progenitor to a postmitotic chromatin remodeling mechanism occurs as neurons exit the cell cycle and become committed to their adult state. The transition from proliferating neural stem/progenitor cells to postmitotic neurons requires a switch in subunit composition of the npBAF and nBAF complexes. As neural progenitors exit mitosis and differentiate into neurons, npBAF complexes which contain ACTL6A/BAF53A and PHF10/BAF45A, are exchanged for homologous alternative ACTL6B/BAF53B and DPF1/BAF45B or DPF3/BAF45C subunits in neuron-specific complexes (nBAF). The npBAF complex is essential for the self-renewal/proliferative capacity of the multipotent neural stem cells. The nBAF complex along with CREST plays a role regulating the activity of genes essential for dendrite growth. Binds DNA non-specifically. This Homo sapiens (Human) protein is AT-rich interactive domain-containing protein 1B.